Reading from the N-terminus, the 679-residue chain is MAPFPDEVDVFTGPHWRMKQLVGLYSEKLSNTNFSNNRDFRSFLQSLLDTFTEFKKHEQIENECIMELLQERSHTVYHVHADNKLSDMLTLFQKGLRSVTSEFEQLNYAQQLKERLEAFTQDFIPHMKEEEEVYQPMLMEYFSYEELKAIKQQVMLQHCSSQCQSSCSDTHTLLKGLSLWSHAELQKAFKYSDHEKTGDERVLERVSVSSLPQELLLRIFRFLGPQDLCRCAQVCSVWTQVTRTGSLWRHLYPVRWARGEYYSGPPGDLDLEPDDDWIKSLQDDGRAYQEWDEDADVDESEEASAERSSISALQREKLLLNGIIQKLLPAVGSSVRSLSLAYSSTLSSKMVRQMLSLCPNLTHLDLTQTDVSDSAFDSWCALGACGTLQHLDLSGCDKITDRTLKILSVGLGDSSTPSPAHKLLQAPPSPIRIEEPRLQPMGRSCQDLIFKRRPGGRGSGCGPTHIWVLDPVKLADIEDAADWSRRGGVASQEIGCGGISEALSASCCCRRSQRRGFRTGLSSSPWQYGDALCGHSSCCSSDAAAIRTQSDLQATGGSAELRTKCWFEGQSCAEHHNRTDQSGAQRALRFLSLSGCHQITDLGLRCVCLRGGLPLLEHLNLSGCPLITGAGLQEVVSASPALNIEHFYYCDNINGPHADTASGCQNLQCGFRVCCRSGE.

The tract at residues 1–159 (MAPFPDEVDV…IKQQVMLQHC (159 aa)) is hemerythrin-like. Fe(3+) is bound by residues His-15, His-57, Glu-58, Glu-61, His-80, His-126, and Glu-130. The 47-residue stretch at 205-251 (RVSVSSLPQELLLRIFRFLGPQDLCRCAQVCSVWTQVTRTGSLWRHL) folds into the F-box domain. 7 LRR repeats span residues 316–342 (EKLL…SLAY), 343–367 (SSTL…LDLT), 368–395 (QTDV…DLSG), 396–426 (CDKI…LLQA), 565–595 (CWFE…SLSG), 596–623 (CHQI…NLSG), and 624–649 (CPLI…HFYY). [2Fe-2S] cluster-binding residues include Cys-650, Cys-664, Cys-674, and Cys-675.

Part of a SCF (SKP1-cullin-F-box) protein ligase complex. Requires [2Fe-2S] cluster as cofactor. In terms of processing, ubiquitinated upon iron and oxygen depletion, leading to its degradation by the proteasome. Ubiquitination is regulated by the hemerythrin-like region that acts as an oxygen and iron sensor.

The protein localises to the cytoplasm. It is found in the perinuclear region. It localises to the nucleus. It functions in the pathway protein modification; protein ubiquitination. In terms of biological role, component of some SCF (SKP1-cullin-F-box) protein ligase complex that plays a central role in iron homeostasis by promoting the ubiquitination and subsequent degradation of ireb2/irp2. Upon high iron and oxygen level, it specifically recognizes and binds ireb2/irp2, promoting its ubiquitination and degradation by the proteasome. The protein is F-box/LRR-repeat protein 5 (fbxl5) of Danio rerio (Zebrafish).